A 132-amino-acid polypeptide reads, in one-letter code: Minor structural pilin EpdB (132 aa).

A propeptide spanning residues 1-4 (MSKG) is cleaved from the precursor. The QXSXEXXXL signature appears at 9 to 19 (EFIVLFLALLV).

In terms of processing, the N-terminus is probably cleaved by the prepilin peptidase EppA, which recognizes the class III signal sequence.

It is found in the secreted. The protein localises to the cell surface. The protein resides in the fimbrium. Functionally, minor component of the type IV-like pili. Essential for pili formation. In Methanococcus maripaludis (strain DSM 14266 / JCM 13030 / NBRC 101832 / S2 / LL), this protein is Minor structural pilin EpdB.